Reading from the N-terminus, the 87-residue chain is U3-theraphotoxin-Hhn1e (87 aa).

Positions 1-24 (MVNMKASMFLTFAGLVLLFVVCYA) are cleaved as a signal peptide. Positions 25–52 (SESEEKEFPKGMLSSIFAVDNDFKQEER) are excised as a propeptide. Disulfide bonds link cysteine 54/cysteine 67, cysteine 61/cysteine 72, and cysteine 66/cysteine 79.

This sequence belongs to the neurotoxin 10 (Hwtx-1) family. 51 (Hntx-8) subfamily. Hntx-8 sub-subfamily. As to expression, expressed by the venom gland.

It localises to the secreted. Its function is as follows. Ion channel inhibitor. The protein is U3-theraphotoxin-Hhn1e of Cyriopagopus hainanus (Chinese bird spider).